A 452-amino-acid chain; its full sequence is Ribosomal protein uS12 methylthiotransferase RimO (452 aa).

The region spanning 5–116 is the MTTase N-terminal domain; that stretch reads PTIAFSHLGC…IVDVLQRTES (112 aa). The [4Fe-4S] cluster site is built by Cys14, Cys50, Cys79, Cys154, Cys158, and Cys161. Positions 140–369 constitute a Radical SAM core domain; it reads TTTSAVAYLR…MATQQPIAER (230 aa). Residues 372–438 enclose the TRAM domain; it reads RAQIGRLVDV…IYDLHGEVAS (67 aa).

The protein belongs to the methylthiotransferase family. RimO subfamily. It depends on [4Fe-4S] cluster as a cofactor.

It localises to the cytoplasm. The enzyme catalyses L-aspartate(89)-[ribosomal protein uS12]-hydrogen + (sulfur carrier)-SH + AH2 + 2 S-adenosyl-L-methionine = 3-methylsulfanyl-L-aspartate(89)-[ribosomal protein uS12]-hydrogen + (sulfur carrier)-H + 5'-deoxyadenosine + L-methionine + A + S-adenosyl-L-homocysteine + 2 H(+). In terms of biological role, catalyzes the methylthiolation of an aspartic acid residue of ribosomal protein uS12. The chain is Ribosomal protein uS12 methylthiotransferase RimO from Synechococcus elongatus (strain ATCC 33912 / PCC 7942 / FACHB-805) (Anacystis nidulans R2).